The sequence spans 335 residues: 2-acylglycerol O-acyltransferase 2-A (335 aa).

The next 2 helical transmembrane spans lie at 24–44 and 47–67; these read WVFS…VLLF and FWII…TPSK.

The protein belongs to the diacylglycerol acyltransferase family.

The protein localises to the endoplasmic reticulum membrane. The protein resides in the cytoplasm. It is found in the perinuclear region. The catalysed reaction is a 2-acylglycerol + an acyl-CoA = a 1,2-diacylglycerol + CoA. It carries out the reaction a 2-acylglycerol + an acyl-CoA = a 1,2-diacyl-sn-glycerol + CoA. The enzyme catalyses a 2-acylglycerol + an acyl-CoA = a 2,3-diacyl-sn-glycerol + CoA. It catalyses the reaction a 1-acylglycerol + an acyl-CoA = a 1,2-diacylglycerol + CoA. The catalysed reaction is a 1-acylglycerol + an acyl-CoA = a 1,3-diacylglycerol + CoA. It carries out the reaction 1-O-alkylglycerol + an acyl-CoA = 1-O-alkyl-3-acylglycerol + CoA. The enzyme catalyses an acyl-CoA + a 1,2-diacyl-sn-glycerol = a triacyl-sn-glycerol + CoA. The protein operates within glycerolipid metabolism; triacylglycerol biosynthesis. Functionally, catalyzes the formation of diacylglycerol from 2-monoacylglycerol and fatty acyl-CoA. Involved in glycerolipid synthesis and lipid metabolism. Catalyzes the formation of diacylglycerol, the precursor of triacylglycerol, by transferring the acyl chain of a fatty acyl-CoA to a monoacylglycerol. Plays a central role in absorption of dietary fat in the small intestine by catalyzing the resynthesis of triacylglycerol in enterocytes. Has a preference toward monoacylglycerols containing unsaturated fatty acids in an order of C18:3 &gt; C18:2 &gt; C18:1 &gt; C18:0 at sn-2. Able to use 1-monoalkylglycerol (1-MAkG, 1-O-alkylglycerol) as an acyl acceptor for the synthesis of monoalkyl-monoacylglycerol (MAMAG, 1-O-alkyl-3-acylglycerol or 1-O-alkyl-2-acylglycerol) and subsequently, with lower efficiency, may add another acyl chain producing monoalkyl-diacylglycerol (MADAG, 1-O-alkyl-2,3-diacylglycerol). Possesses weak but significant activity with diacylglycerol as substrate, producing triacylglycerol (triacyl-sn-glycerol). This is 2-acylglycerol O-acyltransferase 2-A (mogat2-a) from Xenopus laevis (African clawed frog).